The sequence spans 386 residues: Centrosomal protein of 44 kDa (386 aa).

Residues 11 to 194 are binds with microtubules and centrioles; it reads RKLEQVLRSL…GVPEGTVTST (184 aa). Residues 232 to 262 adopt a coiled-coil conformation; that stretch reads ELTALQIALAECQEKLKKLTWIEKRLECLEA. S329 carries the post-translational modification Phosphoserine. The stretch at 359-382 forms a coiled coil; sequence SEETTMQKMERMKKMFEETAELLK.

Interacts with CROCC. Interacts with POC1B; the interaction is direct and recruits POC1B to centriolar microtubules. Binds to centriolar microtubules.

The protein resides in the cytoplasm. It is found in the cytoskeleton. It localises to the microtubule organizing center. The protein localises to the centrosome. Its subcellular location is the centriole. The protein resides in the spindle pole. It is found in the midbody. Centriole-enriched microtubule-binding protein involved in centriole biogenesis. In collaboration with CEP295 and POC1B, is required for the centriole-to-centrosome conversion by ensuring the formation of bona fide centriole wall. Functions as a linker component that maintains centrosome cohesion. Associates with CROCC and regulates its stability and localization to the centrosome. The polypeptide is Centrosomal protein of 44 kDa (Cep44) (Rattus norvegicus (Rat)).